The chain runs to 442 residues: Vacuolar zinc transporter ZRC1 (442 aa).

Residues 1–8 (MITGKELR) are Cytoplasmic-facing. The chain crosses the membrane as a helical span at residues 9–29 (IISLLTLDTVFFLLEITIGYM). At 30–32 (SHS) the chain is on the vacuolar side. The helical transmembrane segment at 33 to 53 (LALIADSFHMLNDIISLLVAL) threads the bilayer. The Cytoplasmic portion of the chain corresponds to 54–75 (WAVDVAKNRGPDAKYTYGWKRA). Residues 76 to 96 (EILGALINAVFLIALCFSIMI) form a helical membrane-spanning segment. Residues 97–112 (EALQRLIEPQEIQNPR) lie on the Vacuolar side of the membrane. Residues 113 to 133 (LVLYVGVAGLISNVVGLFLFH) form a helical membrane-spanning segment. Topologically, residues 134–235 (DHGSDSLHSH…GHRSLNMHGV (102 aa)) are cytoplasmic. Short sequence motifs (histidine repeat) lie at residues 141–145 (HSHSH), 163–167 (HSHSH), and 216–220 (HDHSH). Disordered regions lie at residues 141-170 (HSHS…HASL) and 208-227 (QPLL…KPGH). The segment covering 149–170 (ESGNNDLDIESNATHSHSHASL) has biased composition (polar residues). The span at 212–224 (NHDDHDHSHESKK) shows a compositional bias: basic and acidic residues. The helical transmembrane segment at 236 to 256 (FLHVLGDALGNIGVIAAALFI) threads the bilayer. The Vacuolar segment spans residues 257 to 265 (WKTEYSWRY). Residues 266–286 (YSDPIVSLIITIIIFSSALPL) form a helical membrane-spanning segment. The Cytoplasmic segment spans residues 287-442 (SRRASRILLQ…AVNCNTSNCL (156 aa)). K357 participates in a covalent cross-link: Glycyl lysine isopeptide (Lys-Gly) (interchain with G-Cter in ubiquitin). S387, S393, and S397 each carry phosphoserine. The tract at residues 391–419 (GGSPSSSQEAFDSHGNTEHGRKKRSPTAY) is disordered.

It belongs to the cation diffusion facilitator (CDF) transporter (TC 2.A.4) family. SLC30A subfamily.

Its subcellular location is the vacuole membrane. It catalyses the reaction Zn(2+)(in) = Zn(2+)(out). Functionally, vacuolar transporter that regulates zinc homeostasis by mediating zinc transport and storage into the vacuole. ZRC1 senses zinc availability in the cytosol, which might be performed through the histidine repeat motifs, and transports zinc from the cytosol to the vacuole if zinc in cytosol is abundant, conferring resistance to zinc toxicity. Plays a role in resistance to zinc shock resulting from sudden influx of zinc into cytoplasm when ZRT1 and ZRT2 are induced in response to zinc depletion. The sequence is that of Vacuolar zinc transporter ZRC1 from Saccharomyces cerevisiae (strain ATCC 204508 / S288c) (Baker's yeast).